The sequence spans 184 residues: uncharacterized protein (184 aa).

A disordered region spans residues 146–177 (HPKTSLAQQPNAKATQPPLSKETLNTAKETDP). Residues 150–172 (SLAQQPNAKATQPPLSKETLNTA) show a composition bias toward polar residues.

This is an uncharacterized protein from Picosynechococcus sp. (strain ATCC 27264 / PCC 7002 / PR-6) (Agmenellum quadruplicatum).